The following is a 256-amino-acid chain: Imidazole glycerol phosphate synthase subunit HisF (256 aa).

Catalysis depends on residues aspartate 12 and aspartate 131.

It belongs to the HisA/HisF family. As to quaternary structure, heterodimer of HisH and HisF.

The protein localises to the cytoplasm. It catalyses the reaction 5-[(5-phospho-1-deoxy-D-ribulos-1-ylimino)methylamino]-1-(5-phospho-beta-D-ribosyl)imidazole-4-carboxamide + L-glutamine = D-erythro-1-(imidazol-4-yl)glycerol 3-phosphate + 5-amino-1-(5-phospho-beta-D-ribosyl)imidazole-4-carboxamide + L-glutamate + H(+). The protein operates within amino-acid biosynthesis; L-histidine biosynthesis; L-histidine from 5-phospho-alpha-D-ribose 1-diphosphate: step 5/9. Its function is as follows. IGPS catalyzes the conversion of PRFAR and glutamine to IGP, AICAR and glutamate. The HisF subunit catalyzes the cyclization activity that produces IGP and AICAR from PRFAR using the ammonia provided by the HisH subunit. The polypeptide is Imidazole glycerol phosphate synthase subunit HisF (Bifidobacterium longum (strain NCC 2705)).